Reading from the N-terminus, the 729-residue chain is uncharacterized protein (729 aa).

It belongs to the mimivirus L515/L516 family.

It is found in the virion. This is an uncharacterized protein from Acanthamoeba polyphaga mimivirus (APMV).